A 140-amino-acid chain; its full sequence is Nuclear receptor 2C2-associated protein (140 aa).

The protein belongs to the NR2C2AP family. As to quaternary structure, interacts with NR2C2/TR4.

It localises to the nucleus. In terms of biological role, may act as a repressor of NR2C2-mediated transactivation by suppressing the binding between NR2C2/TR4 and the TR4-response element in target genes. The chain is Nuclear receptor 2C2-associated protein (Nr2c2ap) from Mus musculus (Mouse).